Here is a 232-residue protein sequence, read N- to C-terminus: Small ribosomal subunit protein uS3 (232 aa).

Residues 39 to 107 form the KH type-2 domain; sequence VRQFLTKELA…PAQINIAEVR (69 aa).

Belongs to the universal ribosomal protein uS3 family. As to quaternary structure, part of the 30S ribosomal subunit. Forms a tight complex with proteins S10 and S14.

Functionally, binds the lower part of the 30S subunit head. Binds mRNA in the 70S ribosome, positioning it for translation. This is Small ribosomal subunit protein uS3 from Yersinia pestis bv. Antiqua (strain Antiqua).